The primary structure comprises 386 residues: 3-hydroxyisobutyryl-CoA hydrolase, mitochondrial (386 aa).

A mitochondrion-targeting transit peptide spans 1 to 32 (MGQREMWRLMSRFNAFKRTNTILHHLRMSKHT). 2 positions are modified to N6-acetyllysine; alternate: Lys-55 and Lys-92. An N6-succinyllysine; alternate mark is found at Lys-55 and Lys-92. Substrate is bound by residues Glu-121, Gly-146, Glu-169, and Asp-177. Lys-221 carries the post-translational modification N6-acetyllysine; alternate. Lys-221 carries the N6-succinyllysine; alternate modification. Ser-234 is subject to Phosphoserine. Lys-257 carries the N6-succinyllysine modification. Lys-297 is modified (N6-acetyllysine; alternate). N6-succinyllysine; alternate is present on Lys-297. Lys-301 carries the post-translational modification N6-succinyllysine. Lys-353 bears the N6-acetyllysine; alternate mark. Lys-353 is subject to N6-succinyllysine; alternate. Residue Ser-356 is modified to Phosphoserine. An N6-acetyllysine mark is found at Lys-360 and Lys-365. Lys-377 is subject to N6-succinyllysine.

Belongs to the enoyl-CoA hydratase/isomerase family. Highly expressed in liver and kidney, also detected in heart, muscle and brain (at protein level). Not detected in lung.

Its subcellular location is the mitochondrion. It catalyses the reaction 3-hydroxy-2-methylpropanoyl-CoA + H2O = 3-hydroxy-2-methylpropanoate + CoA + H(+). The protein operates within amino-acid degradation; L-valine degradation. In terms of biological role, hydrolyzes 3-hydroxyisobutyryl-CoA (HIBYL-CoA), a saline catabolite. Has high activity toward isobutyryl-CoA. Could be an isobutyryl-CoA dehydrogenase that functions in valine catabolism. Also hydrolyzes 3-hydroxypropanoyl-CoA. The protein is 3-hydroxyisobutyryl-CoA hydrolase, mitochondrial (HIBCH) of Homo sapiens (Human).